Reading from the N-terminus, the 106-residue chain is Transcription and mRNA export factor SUS1 (106 aa).

This sequence belongs to the ENY2 family. Component of the nuclear pore complex (NPC)-associated TREX-2 complex (transcription and export complex 2), composed of at least SUS1, SAC3, THP1, SEM1, and CDC31. TREX-2 contains 2 SUS1 chains. The TREX-2 complex interacts with the nucleoporin NUP1. Component of the 1.8 MDa SAGA transcription coactivator-HAT complex. SAGA is built of 5 distinct domains with specialized functions. Within the SAGA complex, SUS1, SGF11, SGF73 and UBP8 form an additional subcomplex of SAGA called the DUB module (deubiquitination module). Interacts directly with THP1, SAC3, SGF11, and with the RNA polymerase II.

It is found in the nucleus. It localises to the nucleoplasm. The protein resides in the cytoplasm. The protein localises to the P-body. Involved in mRNA export coupled transcription activation by association with both the TREX-2 and the SAGA complexes. At the promoters, SAGA is required for recruitment of the basal transcription machinery. It influences RNA polymerase II transcriptional activity through different activities such as TBP interaction and promoter selectivity, interaction with transcription activators, and chromatin modification through histone acetylation and deubiquitination. Within the SAGA complex, participates in a subcomplex required for deubiquitination of H2B and for the maintenance of steady-state H3 methylation levels. The TREX-2 complex functions in docking export-competent ribonucleoprotein particles (mRNPs) to the nuclear entrance of the nuclear pore complex (nuclear basket). TREX-2 participates in mRNA export and accurate chromatin positioning in the nucleus by tethering genes to the nuclear periphery. May also be involved in cytoplasmic mRNA decay by interaction with components of P-bodies. This Mycosarcoma maydis (Corn smut fungus) protein is Transcription and mRNA export factor SUS1.